The following is a 350-amino-acid chain: Divinyl chlorophyll a/b light-harvesting protein PcbB (350 aa).

A run of 6 helical transmembrane segments spans residues 27-47 (FLAAHIAHTGLMAFWAGSFTL), 89-109 (IVVTAVLHLVLSMVYAAGGLM), 141-161 (FILGHHLFLLGLGNVQFVEWA), 202-222 (VMGGHAFLALFMMSGGLWHIV), 244-264 (LSWALAGVGWMALVAAFWCAS), and 305-325 (LTNIHYYLGFFYIQGHLWHAL).

This sequence belongs to the PsbB/PsbC family. IsiA/Pcb subfamily. The antenna complex consists of divinyl chlorophylls (a and b) and divinyl chlorophyll a/b binding proteins. Under iron-starvation forms a complex with PSI, consisting of a PSI trimer surrounded by a ring composed of 18 PcbB subunits. The cofactor is divinyl chlorophyll a. It depends on divinyl chlorophyll b as a cofactor.

It is found in the cellular thylakoid membrane. Its function is as follows. The antenna complex functions as a light receptor, it captures and delivers excitation energy to photosystems I. The Prochlorales pcb genes are not related to higher plant LHCs. The sequence is that of Divinyl chlorophyll a/b light-harvesting protein PcbB (pcbB) from Prochlorococcus marinus (strain MIT 9313).